The chain runs to 1580 residues: Ras GTPase-activating protein raskol (1580 aa).

At serine 164 the chain carries Phosphoserine. Threonine 167 is subject to Phosphothreonine. Residues 197–223 form a disordered region; the sequence is LKRTKSVTKLERTKRGSGGLRGSRSHE. Phosphoserine is present on residues serine 221 and serine 224. In terms of domain architecture, PH spans 233–291; it reads STIDLSCTGAVGVAPVHQSVLGRRHCFQVRGGPRGERYYSCGSRQERDLWIYSLRKSIA. The region spanning 282-400 is the C2 domain; the sequence is WIYSLRKSIA…TSRLPCEQWY (119 aa). The region spanning 490-700 is the Ras-GAP domain; that stretch reads GLAGAFLTDV…ARMQQFLEII (211 aa). Disordered regions lie at residues 764–819, 857–892, 904–1023, 1112–1218, 1284–1313, 1334–1443, and 1561–1580; these read GMGT…QPQH, LLQQ…HQHP, AGNQ…SYDD, ANHH…QQFG, LSGG…YGRL, VGYG…LGKS, and YETQ…QKPQ. Over residues 776–805 the composition is skewed to polar residues; the sequence is ATSSTHSIASENQENRNPGSSGSHAGSNSE. Composition is skewed to low complexity over residues 806-818, 857-885, and 926-939; these read QLLP…AQPQ, LLQQ…GHQQ, and SSSL…LLHG. The span at 940-954 shows a compositional bias: basic residues; sequence HQQHAHHPQQLHPHH. The segment covering 987–1020 has biased composition (low complexity); the sequence is TSTPSSTRSRTLPRNGNPNANGNVGSSNNNQSGS. Positions 1140–1150 are enriched in polar residues; sequence SAKSSHCSSGY. Low complexity predominate over residues 1151–1169; the sequence is QSISTNPSPSQSSSPVESQ. A phosphoserine mark is found at serine 1158 and serine 1164. Residues 1186–1206 show a composition bias toward polar residues; sequence PSYQLQPQTGSSRSSAQSNTH. 3 stretches are compositionally biased toward low complexity: residues 1207–1216, 1285–1299, and 1351–1362; these read QQQQQQQQQQ, SGGS…ASTS, and HQQQQNPMQQQQ. Residues 1363-1372 show a composition bias toward basic and acidic residues; sequence QRERDQEHKQ. The segment covering 1374 to 1388 has biased composition (low complexity); the sequence is AGSVAGSVGSATSAA. The segment covering 1396 to 1415 has biased composition (polar residues); it reads SARTLSDSSTDTEGHCNQLQ. Residues serine 1401 and serine 1403 each carry the phosphoserine modification. Positions 1427-1438 are enriched in gly residues; that stretch reads GGSGGGGAGSEQ. A compositionally biased stretch (low complexity) spans 1563–1580; the sequence is TQQQQQQHQAPPKTQKPQ.

The protein resides in the cytoplasm. The protein localises to the cell membrane. It is found in the apical cell membrane. Functionally, GTPase-activating protein, which acts as a negative regulator for some members of the Ras family. Probably decreases their signaling activity by stimulating their intrinsic GTPase activity, thereby lowering the levels of the GTP-bound active form. Functions with DE-cadherin (shg) to promote embryonic border cell (BC) migration and adhesion by regulating the distribution of actin protrusions in BCs. Promotes shg-mediated adhesion at the BC interfaces and likely maintains BC cluster adhesion during BC detachment from the follicular epithelium and subsequent BC migration. Also required for restricting the development of actin-rich protrusions to the front of migrating BC clusters thus ensuring unidirectional BC migration. Possibly functions by suppressing Rac1 signaling in non-leading BCs, thus limiting its activity to leading BCs where it initiates localized actin cytoskeleton remodeling to produce the polarized protrusions. This chain is Ras GTPase-activating protein raskol, found in Drosophila melanogaster (Fruit fly).